Here is a 115-residue protein sequence, read N- to C-terminus: ESX-1 secretion-associated protein EspL (115 aa).

This is ESX-1 secretion-associated protein EspL from Mycobacterium tuberculosis (strain CDC 1551 / Oshkosh).